The chain runs to 381 residues: Chaperone protein DnaJ (381 aa).

A J domain is found at Asp-5 to Gly-70. The CR-type zinc-finger motif lies at Gly-140 to Asp-218. Zn(2+) is bound by residues Cys-153, Cys-156, Cys-170, Cys-173, Cys-192, Cys-195, Cys-206, and Cys-209. 4 CXXCXGXG motif repeats span residues Cys-153–Gly-160, Cys-170–Gly-177, Cys-192–Gly-199, and Cys-206–Gly-213.

The protein belongs to the DnaJ family. As to quaternary structure, homodimer. Zn(2+) serves as cofactor.

The protein localises to the cytoplasm. Functionally, participates actively in the response to hyperosmotic and heat shock by preventing the aggregation of stress-denatured proteins and by disaggregating proteins, also in an autonomous, DnaK-independent fashion. Unfolded proteins bind initially to DnaJ; upon interaction with the DnaJ-bound protein, DnaK hydrolyzes its bound ATP, resulting in the formation of a stable complex. GrpE releases ADP from DnaK; ATP binding to DnaK triggers the release of the substrate protein, thus completing the reaction cycle. Several rounds of ATP-dependent interactions between DnaJ, DnaK and GrpE are required for fully efficient folding. Also involved, together with DnaK and GrpE, in the DNA replication of plasmids through activation of initiation proteins. The sequence is that of Chaperone protein DnaJ from Ruegeria pomeroyi (strain ATCC 700808 / DSM 15171 / DSS-3) (Silicibacter pomeroyi).